The primary structure comprises 186 residues: Inosine/xanthosine triphosphatase (186 aa).

Q75 provides a ligand contact to Mg(2+).

Belongs to the YjjX NTPase family. In terms of assembly, homodimer. Requires Mg(2+) as cofactor. Mn(2+) is required as a cofactor.

The catalysed reaction is XTP + H2O = XDP + phosphate + H(+). The enzyme catalyses ITP + H2O = IDP + phosphate + H(+). In terms of biological role, phosphatase that hydrolyzes non-canonical purine nucleotides such as XTP and ITP to their respective diphosphate derivatives. Probably excludes non-canonical purines from DNA/RNA precursor pool, thus preventing their incorporation into DNA/RNA and avoiding chromosomal lesions. In Shewanella baltica (strain OS195), this protein is Inosine/xanthosine triphosphatase.